Here is a 513-residue protein sequence, read N- to C-terminus: 2,3-bisphosphoglycerate-independent phosphoglycerate mutase (513 aa).

The Mn(2+) site is built by Asp15 and Ser65. Ser65 acts as the Phosphoserine intermediate in catalysis. Substrate is bound by residues His126, 156–157, Arg188, Arg194, 263–266, and Lys337; these read RD and RADR. The Mn(2+) site is built by Asp402, His406, Asp443, His444, and His461.

It belongs to the BPG-independent phosphoglycerate mutase family. As to quaternary structure, monomer. The cofactor is Mn(2+).

It catalyses the reaction (2R)-2-phosphoglycerate = (2R)-3-phosphoglycerate. Its pathway is carbohydrate degradation; glycolysis; pyruvate from D-glyceraldehyde 3-phosphate: step 3/5. Catalyzes the interconversion of 2-phosphoglycerate and 3-phosphoglycerate. This chain is 2,3-bisphosphoglycerate-independent phosphoglycerate mutase, found in Moorella thermoacetica (strain ATCC 39073 / JCM 9320).